Here is a 256-residue protein sequence, read N- to C-terminus: Enolase-phosphatase E1 (256 aa).

The Mg(2+) site is built by Asp14 and Glu16. Substrate is bound by residues 142 to 143 (SS) and Lys176. Residue Asp201 coordinates Mg(2+).

It belongs to the HAD-like hydrolase superfamily. MasA/MtnC family. In terms of assembly, monomer. The cofactor is Mg(2+).

The protein localises to the cytoplasm. It is found in the nucleus. It carries out the reaction 5-methylsulfanyl-2,3-dioxopentyl phosphate + H2O = 1,2-dihydroxy-5-(methylsulfanyl)pent-1-en-3-one + phosphate. It participates in amino-acid biosynthesis; L-methionine biosynthesis via salvage pathway; L-methionine from S-methyl-5-thio-alpha-D-ribose 1-phosphate: step 3/6. The protein operates within amino-acid biosynthesis; L-methionine biosynthesis via salvage pathway; L-methionine from S-methyl-5-thio-alpha-D-ribose 1-phosphate: step 4/6. Functionally, bifunctional enzyme that catalyzes the enolization of 2,3-diketo-5-methylthiopentyl-1-phosphate (DK-MTP-1-P) into the intermediate 2-hydroxy-3-keto-5-methylthiopentenyl-1-phosphate (HK-MTPenyl-1-P), which is then dephosphorylated to form the acireductone 1,2-dihydroxy-3-keto-5-methylthiopentene (DHK-MTPene). This is Enolase-phosphatase E1 from Drosophila simulans (Fruit fly).